The sequence spans 517 residues: Light-independent protochlorophyllide reductase subunit B (517 aa).

Residue aspartate 36 participates in [4Fe-4S] cluster binding. The active-site Proton donor is the aspartate 285. 420–421 (GL) provides a ligand contact to substrate.

This sequence belongs to the ChlB/BchB/BchZ family. Protochlorophyllide reductase is composed of three subunits; BchL, BchN and BchB. Forms a heterotetramer of two BchB and two BchN subunits. It depends on [4Fe-4S] cluster as a cofactor.

The enzyme catalyses chlorophyllide a + oxidized 2[4Fe-4S]-[ferredoxin] + 2 ADP + 2 phosphate = protochlorophyllide a + reduced 2[4Fe-4S]-[ferredoxin] + 2 ATP + 2 H2O. Its pathway is porphyrin-containing compound metabolism; bacteriochlorophyll biosynthesis (light-independent). In terms of biological role, component of the dark-operative protochlorophyllide reductase (DPOR) that uses Mg-ATP and reduced ferredoxin to reduce ring D of protochlorophyllide (Pchlide) to form chlorophyllide a (Chlide). This reaction is light-independent. The NB-protein (BchN-BchB) is the catalytic component of the complex. The protein is Light-independent protochlorophyllide reductase subunit B of Bradyrhizobium sp. (strain BTAi1 / ATCC BAA-1182).